A 143-amino-acid chain; its full sequence is Nucleoside diphosphate kinase (143 aa).

Positions 11, 59, 87, 93, 104, and 114 each coordinate ATP. The active-site Pros-phosphohistidine intermediate is His-117.

The protein belongs to the NDK family. Homotetramer. Requires Mg(2+) as cofactor.

It localises to the cytoplasm. It catalyses the reaction a 2'-deoxyribonucleoside 5'-diphosphate + ATP = a 2'-deoxyribonucleoside 5'-triphosphate + ADP. The catalysed reaction is a ribonucleoside 5'-diphosphate + ATP = a ribonucleoside 5'-triphosphate + ADP. Functionally, major role in the synthesis of nucleoside triphosphates other than ATP. The ATP gamma phosphate is transferred to the NDP beta phosphate via a ping-pong mechanism, using a phosphorylated active-site intermediate. This is Nucleoside diphosphate kinase from Shewanella woodyi (strain ATCC 51908 / MS32).